We begin with the raw amino-acid sequence, 244 residues long: Ribonuclease PH (244 aa).

Residues Arg-86 and 124–126 each bind phosphate; that span reads GTR.

This sequence belongs to the RNase PH family. In terms of assembly, homohexameric ring arranged as a trimer of dimers.

The catalysed reaction is tRNA(n+1) + phosphate = tRNA(n) + a ribonucleoside 5'-diphosphate. Its function is as follows. Phosphorolytic 3'-5' exoribonuclease that plays an important role in tRNA 3'-end maturation. Removes nucleotide residues following the 3'-CCA terminus of tRNAs; can also add nucleotides to the ends of RNA molecules by using nucleoside diphosphates as substrates, but this may not be physiologically important. Probably plays a role in initiation of 16S rRNA degradation (leading to ribosome degradation) during starvation. The polypeptide is Ribonuclease PH (Glaesserella parasuis serovar 5 (strain SH0165) (Haemophilus parasuis)).